The following is a 95-amino-acid chain: Aspartyl/glutamyl-tRNA(Asn/Gln) amidotransferase subunit C (95 aa).

It belongs to the GatC family. In terms of assembly, heterotrimer of A, B and C subunits.

It carries out the reaction L-glutamyl-tRNA(Gln) + L-glutamine + ATP + H2O = L-glutaminyl-tRNA(Gln) + L-glutamate + ADP + phosphate + H(+). It catalyses the reaction L-aspartyl-tRNA(Asn) + L-glutamine + ATP + H2O = L-asparaginyl-tRNA(Asn) + L-glutamate + ADP + phosphate + 2 H(+). In terms of biological role, allows the formation of correctly charged Asn-tRNA(Asn) or Gln-tRNA(Gln) through the transamidation of misacylated Asp-tRNA(Asn) or Glu-tRNA(Gln) in organisms which lack either or both of asparaginyl-tRNA or glutaminyl-tRNA synthetases. The reaction takes place in the presence of glutamine and ATP through an activated phospho-Asp-tRNA(Asn) or phospho-Glu-tRNA(Gln). This chain is Aspartyl/glutamyl-tRNA(Asn/Gln) amidotransferase subunit C, found in Bradyrhizobium diazoefficiens (strain JCM 10833 / BCRC 13528 / IAM 13628 / NBRC 14792 / USDA 110).